We begin with the raw amino-acid sequence, 161 residues long: Ragulator complex protein LAMTOR1 (161 aa).

The interval 1–43 (MGCCYSSENEDSDQDREERKLLLDPSSPPTKALNGAEPNYHSL) is disordered. Gly2 carries N-myristoyl glycine lipidation. 2 S-palmitoyl cysteine lipidation sites follow: Cys3 and Cys4. Lys20 participates in a covalent cross-link: Glycyl lysine isopeptide (Lys-Gly) (interchain with G-Cter in ubiquitin). Ser27 is modified (phosphoserine). A Glycyl lysine isopeptide (Lys-Gly) (interchain with G-Cter in ubiquitin) cross-link involves residue Lys31. Ser42 and Ser56 each carry phosphoserine. Lys60 is covalently cross-linked (Glycyl lysine isopeptide (Lys-Gly) (interchain with G-Cter in ubiquitin)). Phosphoserine is present on Ser98. Glycyl lysine isopeptide (Lys-Gly) (interchain with G-Cter in ubiquitin) cross-links involve residues Lys103 and Lys104. The interaction with LAMTOR2 and LAMTOR3 stretch occupies residues 121 to 161 (SEPIPFSDLQQVSRIAAYAYSALSQIRVDAKEELVVQFGIP). Ser141 carries the post-translational modification Phosphoserine.

Belongs to the LAMTOR1 family. Part of the Ragulator complex composed of LAMTOR1, LAMTOR2, LAMTOR3, LAMTOR4 and LAMTOR5. LAMTOR4 and LAMTOR5 form a heterodimer that interacts, through LAMTOR1, with a LAMTOR2, LAMTOR3 heterodimer. Interacts with LAMTOR2 and LAMTOR3; the interaction is direct. The Ragulator complex interacts with both the mTORC1 complex and heterodimers constituted of the Rag GTPases RagA/RRAGA, RagB/RRAGB, RagC/RRAGC and RagD/RRAGD; regulated by amino acid availability. The Ragulator complex interacts with SLC38A9; the probable amino acid sensor. Component of the lysosomal folliculin complex (LFC), composed of FLCN, FNIP1 (or FNIP2), RagA/RRAGA or RagB/RRAGB GDP-bound, RagC/RRAGC or RagD/RRAGD GTP-bound, and Ragulator. Associates with the lysosomal V-ATPase complex; interaction promotes the guanine nucleotide exchange factor (GEF) of the Ragulator complex. Interacts with MMP14. Interacts with CDKN1B; prevents the interaction of CDKN1B with RHOA leaving RHOA in a form accessible to activation by ARHGEF2. Interacts with PIP4P1. In terms of processing, N-terminal myristoylation and palmitoylation mediates its recruitment to lysosome membranes, thereby promoting localization of the Ragulator complex to lysosomes. N-myristoylation by NMT1 is required for palmitoylation at Cys-3 and Cys-4. May be palmitoylated by ZDHHC3. Ubiquitinated at Lys-60, Lys-103 and Lys-104 by UBE3A, promoting its degradation by the proteasome. Ubiquitination at Lys-20 impairs the association with the lysosomal V-ATPase complex. Deubiquitination at Lys-20 by USP32 promotes the association with the lysosomal V-ATPase complex and subsequent activation of the mTORC1 complex.

The protein resides in the lysosome membrane. It is found in the late endosome membrane. Key component of the Ragulator complex, a multiprotein complex involved in amino acid sensing and activation of mTORC1, a signaling complex promoting cell growth in response to growth factors, energy levels, and amino acids. Activated by amino acids through a mechanism involving the lysosomal V-ATPase, the Ragulator plays a dual role for the small GTPases Rag (RagA/RRAGA, RagB/RRAGB, RagC/RRAGC and/or RagD/RRAGD): it (1) acts as a guanine nucleotide exchange factor (GEF), activating the small GTPases Rag and (2) mediates recruitment of Rag GTPases to the lysosome membrane. Activated Ragulator and Rag GTPases function as a scaffold recruiting mTORC1 to lysosomes where it is in turn activated. LAMTOR1 is directly responsible for anchoring the Ragulator complex to the lysosomal membrane. LAMTOR1 wraps around the other subunits of the Ragulator complex to hold them in place and interacts with the Rag GTPases, thereby playing a key role in the recruitment of the mTORC1 complex to lysosomes. Also involved in the control of embryonic stem cells differentiation via non-canonical RagC/RRAGC and RagD/RRAGD activation: together with FLCN, it is necessary to recruit and activate RagC/RRAGC and RagD/RRAGD at the lysosomes, and to induce exit of embryonic stem cells from pluripotency via non-canonical, mTOR-independent TFE3 inactivation. Also required for late endosomes/lysosomes biogenesis it may regulate both the recycling of receptors through endosomes and the MAPK signaling pathway through recruitment of some of its components to late endosomes. May be involved in cholesterol homeostasis regulating LDL uptake and cholesterol release from late endosomes/lysosomes. May also play a role in RHOA activation. In Homo sapiens (Human), this protein is Ragulator complex protein LAMTOR1.